Consider the following 178-residue polypeptide: Interleukin-10 (178 aa).

A signal peptide spans 1–18 (MHSSALLCCLVLLTGVRA). Intrachain disulfides connect C30–C126 and C80–C132. N134 is a glycosylation site (N-linked (GlcNAc...) asparagine).

Belongs to the IL-10 family. In terms of assembly, homodimer. Interacts with IL10RA and IL10RB.

The protein localises to the secreted. In terms of biological role, major immune regulatory cytokine that acts on many cells of the immune system where it has profound anti-inflammatory functions, limiting excessive tissue disruption caused by inflammation. Mechanistically, IL10 binds to its heterotetrameric receptor comprising IL10RA and IL10RB leading to JAK1 and STAT2-mediated phosphorylation of STAT3. In turn, STAT3 translocates to the nucleus where it drives expression of anti-inflammatory mediators. Targets antigen-presenting cells (APCs) such as macrophages and monocytes and inhibits their release of pro-inflammatory cytokines including granulocyte-macrophage colony-stimulating factor /GM-CSF, granulocyte colony-stimulating factor/G-CSF, IL-1 alpha, IL-1 beta, IL-6, IL-8 and TNF-alpha. Also interferes with antigen presentation by reducing the expression of MHC-class II and co-stimulatory molecules, thereby inhibiting their ability to induce T cell activation. In addition, controls the inflammatory response of macrophages by reprogramming essential metabolic pathways including mTOR signaling. In Macaca mulatta (Rhesus macaque), this protein is Interleukin-10 (IL10).